Reading from the N-terminus, the 327-residue chain is tRNA uridine(34) hydroxylase (327 aa).

A Rhodanese domain is found at glutamine 122–tryptophan 218. Cysteine 178 serves as the catalytic Cysteine persulfide intermediate.

Belongs to the TrhO family.

It catalyses the reaction uridine(34) in tRNA + AH2 + O2 = 5-hydroxyuridine(34) in tRNA + A + H2O. Catalyzes oxygen-dependent 5-hydroxyuridine (ho5U) modification at position 34 in tRNAs. The chain is tRNA uridine(34) hydroxylase from Chlamydia trachomatis serovar L2 (strain ATCC VR-902B / DSM 19102 / 434/Bu).